Reading from the N-terminus, the 244-residue chain is Phosphoadenosine 5'-phosphosulfate reductase (244 aa).

The active-site Nucleophile; cysteine thiosulfonate intermediate is Cys239.

This sequence belongs to the PAPS reductase family. CysH subfamily.

It is found in the cytoplasm. The catalysed reaction is [thioredoxin]-disulfide + sulfite + adenosine 3',5'-bisphosphate + 2 H(+) = [thioredoxin]-dithiol + 3'-phosphoadenylyl sulfate. The protein operates within sulfur metabolism; hydrogen sulfide biosynthesis; sulfite from sulfate: step 3/3. Functionally, catalyzes the formation of sulfite from phosphoadenosine 5'-phosphosulfate (PAPS) using thioredoxin as an electron donor. The polypeptide is Phosphoadenosine 5'-phosphosulfate reductase (Salmonella paratyphi A (strain AKU_12601)).